The sequence spans 167 residues: Regulator of sigma D (167 aa).

This sequence belongs to the Rsd/AlgQ family. Interacts with RpoD.

The protein resides in the cytoplasm. Functionally, binds RpoD and negatively regulates RpoD-mediated transcription activation by preventing the interaction between the primary sigma factor RpoD with the catalytic core of the RNA polymerase and with promoter DNA. May be involved in replacement of the RNA polymerase sigma subunit from RpoD to RpoS during the transition from exponential growth to the stationary phase. The polypeptide is Regulator of sigma D (Yersinia enterocolitica serotype O:8 / biotype 1B (strain NCTC 13174 / 8081)).